The sequence spans 300 residues: GTPase Era (300 aa).

Residues Arg-8–Glu-176 enclose the Era-type G domain. The segment at Gly-16–Ser-23 is G1. Position 16–23 (Gly-16–Ser-23) interacts with GTP. Positions Gln-42–His-46 are G2. The tract at residues Asp-63–Gly-66 is G3. Residues Asp-63–Met-67 and Asn-125–Asp-128 each bind GTP. The segment at Asn-125 to Asp-128 is G4. Residues Ile-155 to Ala-157 form a G5 region. A KH type-2 domain is found at Val-199–Gly-283.

Belongs to the TRAFAC class TrmE-Era-EngA-EngB-Septin-like GTPase superfamily. Era GTPase family. As to quaternary structure, monomer.

It localises to the cytoplasm. The protein resides in the cell inner membrane. Functionally, an essential GTPase that binds both GDP and GTP, with rapid nucleotide exchange. Plays a role in 16S rRNA processing and 30S ribosomal subunit biogenesis and possibly also in cell cycle regulation and energy metabolism. The sequence is that of GTPase Era from Pseudomonas syringae pv. tomato (strain ATCC BAA-871 / DC3000).